Consider the following 412-residue polypeptide: ORC1-type DNA replication protein 2 (412 aa).

Residues 61–65 (VGKTA), tyrosine 207, and arginine 219 contribute to the ATP site.

The protein belongs to the CDC6/cdc18 family.

Involved in regulation of DNA replication. The protein is ORC1-type DNA replication protein 2 (cdc6b) of Haloarcula marismortui (strain ATCC 43049 / DSM 3752 / JCM 8966 / VKM B-1809) (Halobacterium marismortui).